We begin with the raw amino-acid sequence, 61 residues long: UPF0391 membrane protein Aave_0978 (61 aa).

2 helical membrane-spanning segments follow: residues 5–25 and 33–53; these read AIIF…GVAA and ILFF…VLGV.

It belongs to the UPF0391 family.

It localises to the cell membrane. This chain is UPF0391 membrane protein Aave_0978, found in Paracidovorax citrulli (strain AAC00-1) (Acidovorax citrulli).